Consider the following 312-residue polypeptide: tRNA-dihydrouridine(16) synthase (312 aa).

Residues 7–9 (PMQ) and Gln-68 contribute to the FMN site. Cys-98 serves as the catalytic Proton donor. Residues Lys-139, 200-202 (NGE), and 224-225 (GR) each bind FMN.

It belongs to the Dus family. DusC subfamily. Requires FMN as cofactor.

The enzyme catalyses 5,6-dihydrouridine(16) in tRNA + NADP(+) = uridine(16) in tRNA + NADPH + H(+). The catalysed reaction is 5,6-dihydrouridine(16) in tRNA + NAD(+) = uridine(16) in tRNA + NADH + H(+). Functionally, catalyzes the synthesis of 5,6-dihydrouridine (D), a modified base found in the D-loop of most tRNAs, via the reduction of the C5-C6 double bond in target uridines. Specifically modifies U16 in tRNAs. The chain is tRNA-dihydrouridine(16) synthase from Pasteurella multocida (strain Pm70).